A 513-amino-acid chain; its full sequence is ATP synthase subunit alpha (513 aa).

Residue 169–176 coordinates ATP; it reads GDRQTGKT.

It belongs to the ATPase alpha/beta chains family. F-type ATPases have 2 components, CF(1) - the catalytic core - and CF(0) - the membrane proton channel. CF(1) has five subunits: alpha(3), beta(3), gamma(1), delta(1), epsilon(1). CF(0) has three main subunits: a(1), b(2) and c(9-12). The alpha and beta chains form an alternating ring which encloses part of the gamma chain. CF(1) is attached to CF(0) by a central stalk formed by the gamma and epsilon chains, while a peripheral stalk is formed by the delta and b chains.

The protein resides in the cell inner membrane. It catalyses the reaction ATP + H2O + 4 H(+)(in) = ADP + phosphate + 5 H(+)(out). Its function is as follows. Produces ATP from ADP in the presence of a proton gradient across the membrane. The alpha chain is a regulatory subunit. The protein is ATP synthase subunit alpha of Methylobacillus flagellatus (strain ATCC 51484 / DSM 6875 / VKM B-1610 / KT).